The following is a 324-amino-acid chain: Lipoyl synthase (324 aa).

Residues Cys72, Cys77, Cys83, Cys98, Cys102, Cys105, and Ser313 each coordinate [4Fe-4S] cluster. One can recognise a Radical SAM core domain in the interval 84 to 302 (FRFGTASFMI…AQEGKKMGFL (219 aa)).

The protein belongs to the radical SAM superfamily. Lipoyl synthase family. The cofactor is [4Fe-4S] cluster.

It is found in the cytoplasm. The catalysed reaction is [[Fe-S] cluster scaffold protein carrying a second [4Fe-4S](2+) cluster] + N(6)-octanoyl-L-lysyl-[protein] + 2 oxidized [2Fe-2S]-[ferredoxin] + 2 S-adenosyl-L-methionine + 4 H(+) = [[Fe-S] cluster scaffold protein] + N(6)-[(R)-dihydrolipoyl]-L-lysyl-[protein] + 4 Fe(3+) + 2 hydrogen sulfide + 2 5'-deoxyadenosine + 2 L-methionine + 2 reduced [2Fe-2S]-[ferredoxin]. Its pathway is protein modification; protein lipoylation via endogenous pathway; protein N(6)-(lipoyl)lysine from octanoyl-[acyl-carrier-protein]: step 2/2. In terms of biological role, catalyzes the radical-mediated insertion of two sulfur atoms into the C-6 and C-8 positions of the octanoyl moiety bound to the lipoyl domains of lipoate-dependent enzymes, thereby converting the octanoylated domains into lipoylated derivatives. The protein is Lipoyl synthase of Dichelobacter nodosus (strain VCS1703A).